The chain runs to 692 residues: Elongation factor G (692 aa).

In terms of domain architecture, tr-type G spans 8–282 (EKTRNIGIMA…AVLDYLPAPT (275 aa)). GTP is bound by residues 17–24 (AHIDAGKT), 81–85 (DTPGH), and 135–138 (NKMD). Residues serine 213, serine 302, serine 569, and serine 680 each carry the phosphoserine modification.

Belongs to the TRAFAC class translation factor GTPase superfamily. Classic translation factor GTPase family. EF-G/EF-2 subfamily. In terms of processing, phosphorylated on threonine residue(s). Phosphorylated by PrkC and dephosphorylated by PrpC, in vitro.

It localises to the cytoplasm. Its function is as follows. Catalyzes the GTP-dependent ribosomal translocation step during translation elongation. During this step, the ribosome changes from the pre-translocational (PRE) to the post-translocational (POST) state as the newly formed A-site-bound peptidyl-tRNA and P-site-bound deacylated tRNA move to the P and E sites, respectively. Catalyzes the coordinated movement of the two tRNA molecules, the mRNA and conformational changes in the ribosome. This chain is Elongation factor G (fusA), found in Bacillus subtilis (strain 168).